The following is a 271-amino-acid chain: 2-aminophenol 1,6-dioxygenase alpha subunit (271 aa).

It belongs to the LigB/MhpB extradiol dioxygenase family. In terms of assembly, heterotetramer of 2 alpha and 2 beta subunits.

In terms of biological role, component of the 2-aminophenol 1,6-dioxygenase complex that catalyzes the ring fission of 2-aminophenol to produce 2-aminomuconic 6-semialdehyde. AmnA seems to have a role in the stability of the complex. The polypeptide is 2-aminophenol 1,6-dioxygenase alpha subunit (amnA) (Pseudomonas sp).